A 616-amino-acid chain; its full sequence is MALLQISEPGLSAAPHQRRLAAGIDLGTTNSLVATVRSGQAETLPDHEGRHLLPSVVHYQQQGHTVGYAARDNAAQDTANTISSVKRMMGRSLADIQTRYPHLPYRFKASVNGLPMIDTAAGLLNPVRVSADILKALAARASESLSGELDGVVITVPAYFDDAQRQGTKDAARLAGLHVLRLLNEPTAAAIAYGLDSGKEGVIAVYDLGGGTFDISILRLSRGVFEVLATGGDSALGGDDFDHLLADYIREQAGIADRSDNRVQRELLDAAIAAKIALSDADTVRVNVAGWQGEITREQFNDLISALVKRTLLACRRALKDAGVEPQDVLEVVMVGGSTRVPLVRERVGEFFGRTPLTAIDPDKVVAIGAAIQADILVGNKPDSEMLLLDVIPLSLGLETMGGLVEKVIPRNTTIPVARAQDFTTFKDGQTAMSIHVMQGERELVQDCRSLARFALRGIPPLPAGGAHIRVTFQVDADGLLSVTAMEKSTGVEASIQVKPSYGLTDGEIASMIKDSMSFAEQDVKARMLAEQKVEAARVLESLTGALTADAALLSAAERQCIDDAAAHLSAVAQGDDVDAIEQAIKNVDKQTQEFAARRMDQSVRRALKGHSVDEV.

It belongs to the heat shock protein 70 family.

Its function is as follows. Chaperone involved in the maturation of iron-sulfur cluster-containing proteins. Has a low intrinsic ATPase activity which is markedly stimulated by HscB. Involved in the maturation of IscU. This chain is Chaperone protein HscA, found in Salmonella typhimurium (strain LT2 / SGSC1412 / ATCC 700720).